Here is a 156-residue protein sequence, read N- to C-terminus: Bacterial ferritin (156 aa).

Residues 1–146 (MKGKPAVLAQ…KQLGLIEKIG (146 aa)) enclose the Ferritin-like diiron domain. Fe cation contacts are provided by Glu-18, Glu-51, His-54, Glu-94, Glu-128, and His-131.

It belongs to the bacterioferritin family. As to quaternary structure, the bacterioferritin (BFR) complex is formed of 24 subunits (BfrA and BfrB) of unknown stoichiometry. The BFR is arranged as 12 dimers that are packed together to form an approximately spherical molecule with a central cavity, in which large amounts of iron can be deposited.

It is found in the cytoplasm. It carries out the reaction 4 Fe(2+) + O2 + 4 H(+) = 4 Fe(3+) + 2 H2O. The catalysed reaction is Fe(2+)(in) = Fe(2+)(out). Functionally, part of the iron-storage bacterioferritin (BFR) complex which stores about 50% of intracellular iron. Iron-storage protein, whose ferroxidase center binds Fe(2+), oxidizes it using dioxygen to Fe(3+), and participates in the subsequent Fe(3+) oxide mineral core formation within the central cavity of the BFR protein shell. BFR rapidly binds iron in labeling experiments in vivo during iron-limiting conditions. The chain is Bacterial ferritin from Synechocystis sp. (strain ATCC 27184 / PCC 6803 / Kazusa).